The sequence spans 187 residues: uncharacterized protein (187 aa).

Residues Asn26–Gln157 enclose the Nudix hydrolase domain. Positions Gly64–Asn86 match the Nudix box motif. Mg(2+)-binding residues include Glu80 and Glu84.

Belongs to the Nudix hydrolase family. PCD1 subfamily. Requires Mn(2+) as cofactor. It depends on Mg(2+) as a cofactor.

Probably mediates the hydrolysis of some nucleoside diphosphate derivatives. This is an uncharacterized protein from Photorhabdus laumondii subsp. laumondii (strain DSM 15139 / CIP 105565 / TT01) (Photorhabdus luminescens subsp. laumondii).